The following is a 379-amino-acid chain: Lipoyl synthase, mitochondrial (379 aa).

Residues cysteine 106, cysteine 111, cysteine 117, cysteine 137, cysteine 141, cysteine 144, and serine 352 each coordinate [4Fe-4S] cluster. Residues 122–341 form the Radical SAM core domain; that stretch reads EHGTQTATIM…EERGNALGFL (220 aa).

Belongs to the radical SAM superfamily. Lipoyl synthase family. [4Fe-4S] cluster is required as a cofactor.

It localises to the mitochondrion. The catalysed reaction is [[Fe-S] cluster scaffold protein carrying a second [4Fe-4S](2+) cluster] + N(6)-octanoyl-L-lysyl-[protein] + 2 oxidized [2Fe-2S]-[ferredoxin] + 2 S-adenosyl-L-methionine + 4 H(+) = [[Fe-S] cluster scaffold protein] + N(6)-[(R)-dihydrolipoyl]-L-lysyl-[protein] + 4 Fe(3+) + 2 hydrogen sulfide + 2 5'-deoxyadenosine + 2 L-methionine + 2 reduced [2Fe-2S]-[ferredoxin]. It participates in protein modification; protein lipoylation via endogenous pathway; protein N(6)-(lipoyl)lysine from octanoyl-[acyl-carrier-protein]: step 2/2. Its function is as follows. Catalyzes the radical-mediated insertion of two sulfur atoms into the C-6 and C-8 positions of the octanoyl moiety bound to the lipoyl domains of lipoate-dependent enzymes, thereby converting the octanoylated domains into lipoylated derivatives. The chain is Lipoyl synthase, mitochondrial from Drosophila erecta (Fruit fly).